A 261-amino-acid chain; its full sequence is tRNA pseudouridine synthase A (261 aa).

The Nucleophile role is filled by Asp51. A substrate-binding site is contributed by Tyr109.

Belongs to the tRNA pseudouridine synthase TruA family. As to quaternary structure, homodimer.

It carries out the reaction uridine(38/39/40) in tRNA = pseudouridine(38/39/40) in tRNA. Functionally, formation of pseudouridine at positions 38, 39 and 40 in the anticodon stem and loop of transfer RNAs. This Shewanella sp. (strain ANA-3) protein is tRNA pseudouridine synthase A.